We begin with the raw amino-acid sequence, 245 residues long: tRNA (guanine-N(1)-)-methyltransferase (245 aa).

Residues Gly113 and Ile133–Leu138 contribute to the S-adenosyl-L-methionine site.

This sequence belongs to the RNA methyltransferase TrmD family. In terms of assembly, homodimer.

Its subcellular location is the cytoplasm. The catalysed reaction is guanosine(37) in tRNA + S-adenosyl-L-methionine = N(1)-methylguanosine(37) in tRNA + S-adenosyl-L-homocysteine + H(+). Functionally, specifically methylates guanosine-37 in various tRNAs. This is tRNA (guanine-N(1)-)-methyltransferase from Actinobacillus succinogenes (strain ATCC 55618 / DSM 22257 / CCUG 43843 / 130Z).